The primary structure comprises 175 residues: CEN-like protein 4 (175 aa).

Belongs to the phosphatidylethanolamine-binding protein family. Expressed in vegetative axillary meristems but not in the main shoot meristem.

The protein resides in the cytoplasm. In terms of biological role, may form complexes with phosphorylated ligands by interfering with kinases and their effectors. The chain is CEN-like protein 4 (CET4) from Nicotiana tabacum (Common tobacco).